Here is a 277-residue protein sequence, read N- to C-terminus: Kallikrein-13 (277 aa).

The signal sequence occupies residues 1–16 (MWPLALVIASLTLALS). Asn30 is a glycosylation site (N-linked (GlcNAc...) asparagine). Positions 36 to 263 (LPGGYTCFPH…YVLWIRETIR (228 aa)) constitute a Peptidase S1 domain. 5 cysteine pairs are disulfide-bonded: Cys42-Cys178, Cys61-Cys77, Cys157-Cys224, Cys189-Cys203, and Cys214-Cys239. Residues His76 and Asp124 each act as charge relay system in the active site. The Charge relay system role is filled by Ser218. N-linked (GlcNAc...) asparagine glycosylation is present at Asn225.

This sequence belongs to the peptidase S1 family. Kallikrein subfamily. In terms of tissue distribution, expressed in prostate, breast, testis and salivary gland.

The protein resides in the secreted. The protein is Kallikrein-13 (KLK13) of Homo sapiens (Human).